The following is a 298-amino-acid chain: Ribosomal protein L11 methyltransferase (298 aa).

S-adenosyl-L-methionine is bound by residues threonine 139, glycine 163, aspartate 185, and asparagine 232.

The protein belongs to the methyltransferase superfamily. PrmA family.

The protein resides in the cytoplasm. The catalysed reaction is L-lysyl-[protein] + 3 S-adenosyl-L-methionine = N(6),N(6),N(6)-trimethyl-L-lysyl-[protein] + 3 S-adenosyl-L-homocysteine + 3 H(+). Methylates ribosomal protein L11. The protein is Ribosomal protein L11 methyltransferase of Microcystis aeruginosa (strain NIES-843 / IAM M-2473).